A 275-amino-acid chain; its full sequence is MTTFKAILLGIVQGLTEFLPVSSSGHLAVTQHLLGVPEDRILFLTILLHVGTLFSVFFVYADDIFMICKEFILMIVDLLTGKGIRVNNQYRKLGLLIIVATIPTGIIGLFFKDLFTSFYNSTLIIGISLLVTGTLLWTAEKVNTGKRDIKDMNWFDAVIVGLFQGLAITPGISRSGSTIVGSLFRGFNKELATKFSFLISIPAILGATVFEVKDVLEVGLGDFTLTMLIAGVLASFLSGVFAIRTLINFIKKEKLYYFSYYTWTVGSIVILFSLL.

7 helical membrane-spanning segments follow: residues 1-21, 41-61, 95-115, 118-138, 192-212, 223-243, and 255-275; these read MTTF…FLPV, ILFL…FVYA, LLII…KDLF, FYNS…LLWT, ATKF…VFEV, FTLT…VFAI, and LYYF…FSLL.

The protein belongs to the UppP family.

The protein resides in the cell membrane. The catalysed reaction is di-trans,octa-cis-undecaprenyl diphosphate + H2O = di-trans,octa-cis-undecaprenyl phosphate + phosphate + H(+). Catalyzes the dephosphorylation of undecaprenyl diphosphate (UPP). Confers resistance to bacitracin. The polypeptide is Undecaprenyl-diphosphatase (Alkaliphilus metalliredigens (strain QYMF)).